Here is a 189-residue protein sequence, read N- to C-terminus: UPF0316 protein Sca_1484 (189 aa).

A run of 3 helical transmembrane segments spans residues 8 to 28 (PWLM…CLTV), 40 to 60 (VAAA…GLVM), and 66 to 86 (FQNI…GMKI).

It belongs to the UPF0316 family.

The protein resides in the cell membrane. In Staphylococcus carnosus (strain TM300), this protein is UPF0316 protein Sca_1484.